Reading from the N-terminus, the 167-residue chain is Large ribosomal subunit protein uL10 (167 aa).

It belongs to the universal ribosomal protein uL10 family. As to quaternary structure, part of the ribosomal stalk of the 50S ribosomal subunit. The N-terminus interacts with L11 and the large rRNA to form the base of the stalk. The C-terminus forms an elongated spine to which L12 dimers bind in a sequential fashion forming a multimeric L10(L12)X complex.

Functionally, forms part of the ribosomal stalk, playing a central role in the interaction of the ribosome with GTP-bound translation factors. This chain is Large ribosomal subunit protein uL10, found in Paraburkholderia phytofirmans (strain DSM 17436 / LMG 22146 / PsJN) (Burkholderia phytofirmans).